The chain runs to 208 residues: Large ribosomal subunit protein uL4 (208 aa).

The disordered stretch occupies residues 44-79 (QRQGTHKSKERSEISGSTRKIGRQKGGGGARRGDMN).

It belongs to the universal ribosomal protein uL4 family. In terms of assembly, part of the 50S ribosomal subunit.

One of the primary rRNA binding proteins, this protein initially binds near the 5'-end of the 23S rRNA. It is important during the early stages of 50S assembly. It makes multiple contacts with different domains of the 23S rRNA in the assembled 50S subunit and ribosome. Functionally, forms part of the polypeptide exit tunnel. This chain is Large ribosomal subunit protein uL4, found in Bacteroides fragilis (strain YCH46).